A 438-amino-acid polypeptide reads, in one-letter code: GTPase Der (438 aa).

EngA-type G domains lie at 4–168 (PIVA…PEGN) and 177–352 (IRIA…GNYC). GTP-binding positions include 10–17 (GRPNVGKS), 57–61 (DTGGI), 120–123 (NKID), 183–190 (GRPNVGKS), 230–234 (DTAGL), and 295–298 (NKWD). The region spanning 353 to 437 (KRIKTGILND…GIKLEFRERK (85 aa)) is the KH-like domain.

This sequence belongs to the TRAFAC class TrmE-Era-EngA-EngB-Septin-like GTPase superfamily. EngA (Der) GTPase family. In terms of assembly, associates with the 50S ribosomal subunit.

Functionally, GTPase that plays an essential role in the late steps of ribosome biogenesis. The protein is GTPase Der of Clostridium novyi (strain NT).